The following is a 272-amino-acid chain: HMP-PP phosphatase (272 aa).

The Nucleophile role is filled by D8. The Mg(2+) site is built by D8, D10, and D212.

This sequence belongs to the HAD-like hydrolase superfamily. Cof family. The cofactor is Mg(2+).

It carries out the reaction 4-amino-2-methyl-5-(diphosphooxymethyl)pyrimidine + H2O = 4-amino-2-methyl-5-(phosphooxymethyl)pyrimidine + phosphate + H(+). In terms of biological role, catalyzes the hydrolysis of 4-amino-2-methyl-5-hydroxymethylpyrimidine pyrophosphate (HMP-PP) to 4-amino-2-methyl-5-hydroxymethylpyrimidine phosphate (HMP-P). The chain is HMP-PP phosphatase from Escherichia coli O81 (strain ED1a).